The chain runs to 224 residues: Cytidylate kinase (224 aa).

12–20 (GPSGAGKGT) is an ATP binding site.

The protein belongs to the cytidylate kinase family. Type 1 subfamily.

The protein localises to the cytoplasm. The catalysed reaction is CMP + ATP = CDP + ADP. The enzyme catalyses dCMP + ATP = dCDP + ADP. This is Cytidylate kinase from Aliivibrio salmonicida (strain LFI1238) (Vibrio salmonicida (strain LFI1238)).